Consider the following 455-residue polypeptide: Regulatory protein LuxO (455 aa).

The Response regulatory domain occupies 1-112 (MVEDTASVAA…RLRVTVNNAI (112 aa)). A 4-aspartylphosphate modification is found at Asp-47. Residues 132–361 (FIGSSQTMQA…LQNVLRNVVV (230 aa)) form the Sigma-54 factor interaction domain. ATP contacts are provided by residues 160 to 167 (GESGTGKE) and 223 to 232 (ADGGTLFLDE).

Involved in the regulation of different processes depending on the cell density. Acts together with sigma-54 to repress, perhaps indirectly, some genes. The polypeptide is Regulatory protein LuxO (luxO) (Vibrio cholerae serotype O1 (strain ATCC 39315 / El Tor Inaba N16961)).